Reading from the N-terminus, the 281-residue chain is Elongation factor Ts (281 aa).

The interval 86–89 (TDFV) is involved in Mg(2+) ion dislocation from EF-Tu.

It belongs to the EF-Ts family.

Its subcellular location is the cytoplasm. Its function is as follows. Associates with the EF-Tu.GDP complex and induces the exchange of GDP to GTP. It remains bound to the aminoacyl-tRNA.EF-Tu.GTP complex up to the GTP hydrolysis stage on the ribosome. This Beutenbergia cavernae (strain ATCC BAA-8 / DSM 12333 / CCUG 43141 / JCM 11478 / NBRC 16432 / NCIMB 13614 / HKI 0122) protein is Elongation factor Ts.